The following is a 386-amino-acid chain: Synaptotagmin-5 (386 aa).

The segment covering 1–16 (MFPEPPTLGSPAPKTP) has biased composition (pro residues). The segment at 1-21 (MFPEPPTLGSPAPKTPPDSSR) is disordered. Over 1 to 24 (MFPEPPTLGSPAPKTPPDSSRIRQ) the chain is Vesicular. A helical membrane pass occupies residues 25 to 45 (GAVPAWVLATIVLGSGLLVFS). The Cytoplasmic segment spans residues 46–386 (SCFCLYRKRC…PDRARPIPAP (341 aa)). C2 domains follow at residues 108-227 (QLGR…QAWR) and 239-372 (KLGD…AQWH). Ca(2+)-binding residues include leucine 138, aspartate 139, aspartate 145, aspartate 197, phenylalanine 198, aspartate 199, serine 202, aspartate 205, aspartate 270, aspartate 276, aspartate 330, and aspartate 332.

The protein belongs to the synaptotagmin family. Homodimer. Interacts with both alpha- and beta-tubulin. Ca(2+) serves as cofactor.

It is found in the cytoplasmic vesicle. The protein resides in the secretory vesicle. Its subcellular location is the synaptic vesicle membrane. It localises to the recycling endosome membrane. In terms of biological role, may be involved in Ca(2+)-dependent exocytosis of secretory vesicles through Ca(2+) and phospholipid binding to the C2 domain or may serve as Ca(2+) sensors in the process of vesicular trafficking and exocytosis. Regulates the Ca(2+)-dependent secretion of norepinephrine in PC12 cells. Required for export from the endocytic recycling compartment to the cell surface. The polypeptide is Synaptotagmin-5 (Syt5) (Mus musculus (Mouse)).